The sequence spans 377 residues: Chaperone protein DnaJ (377 aa).

A J domain is found at D5–G70. The CR-type zinc finger occupies G137–T219. Residues C150, C153, C167, C170, C193, C196, C207, and C210 each coordinate Zn(2+). CXXCXGXG motif repeat units follow at residues C150–G157, C167–G174, C193–G200, and C207–G214.

Belongs to the DnaJ family. Homodimer. It depends on Zn(2+) as a cofactor.

The protein localises to the cytoplasm. Its function is as follows. Participates actively in the response to hyperosmotic and heat shock by preventing the aggregation of stress-denatured proteins and by disaggregating proteins, also in an autonomous, DnaK-independent fashion. Unfolded proteins bind initially to DnaJ; upon interaction with the DnaJ-bound protein, DnaK hydrolyzes its bound ATP, resulting in the formation of a stable complex. GrpE releases ADP from DnaK; ATP binding to DnaK triggers the release of the substrate protein, thus completing the reaction cycle. Several rounds of ATP-dependent interactions between DnaJ, DnaK and GrpE are required for fully efficient folding. Also involved, together with DnaK and GrpE, in the DNA replication of plasmids through activation of initiation proteins. This Clostridium beijerinckii (strain ATCC 51743 / NCIMB 8052) (Clostridium acetobutylicum) protein is Chaperone protein DnaJ.